Consider the following 74-residue polypeptide: Large ribosomal subunit protein uL30 (74 aa).

It belongs to the universal ribosomal protein uL30 family. In terms of assembly, part of the 50S ribosomal subunit.

This is Large ribosomal subunit protein uL30 from Micrococcus luteus (strain ATCC 4698 / DSM 20030 / JCM 1464 / CCM 169 / CCUG 5858 / IAM 1056 / NBRC 3333 / NCIMB 9278 / NCTC 2665 / VKM Ac-2230) (Micrococcus lysodeikticus).